A 61-amino-acid polypeptide reads, in one-letter code: Conotoxin TxMRCL-04 (61 aa).

Residues 1–22 (MRCLPVFVILLLLIASTPSVDA) form the signal peptide. Residues 23-46 (QLKTKDDMSLASFHDNVKRILQIR) constitute a propeptide that is removed on maturation.

This sequence belongs to the conotoxin T superfamily. Post-translationally, contains 2 disulfide bonds that can be either 'C1-C3, C2-C4' or 'C1-C4, C2-C3', since these disulfide connectivities have been observed for conotoxins with cysteine framework V (for examples, see AC P0DQQ7 and AC P81755). Expressed by the venom duct.

It localises to the secreted. The protein is Conotoxin TxMRCL-04 of Conus textile (Cloth-of-gold cone).